We begin with the raw amino-acid sequence, 628 residues long: Set1/Ash2 histone methyltransferase complex subunit ASH2 (628 aa).

Residue methionine 1 is modified to N-acetylmethionine. Positions 1-18 (MAAAGAGPGQEAGAGPGP) are enriched in gly residues. A PHD-type; atypical zinc finger spans residues 1-66 (MAAAGAGPGQ…SGEAEGGEAN (66 aa)). The interval 1 to 107 (MAAAGAGPGQ…QAGSVDEENG (107 aa)) is disordered. Over residues 36 to 65 (AAGAAAPPGEGISAAPTVEPSSGEAEGGEA) the composition is skewed to low complexity. Residues 67–177 (LVDVSGGLET…MCLSALANLT (111 aa)) are DNA-binding. Phosphoserine is present on serine 101. The C4-type zinc-finger motif lies at 117 to 150 (CGICTKWFTADTFGIDTSSCLPFMTNYSFHCNVC). Residues 235-252 (LVKEHPDPGSKDPEEDYP) show a composition bias toward basic and acidic residues. The tract at residues 235–331 (LVKEHPDPGS…AQRLPPHGYP (97 aa)) is disordered. The segment covering 270-282 (NQKQSSAVSTSGN) has biased composition (polar residues). Gly residues predominate over residues 283–295 (LNGGIAAGSSGKG). The residue at position 296 (arginine 296) is an Asymmetric dimethylarginine; by PRMT1 and PRMT5. At serine 316 the chain carries Phosphoserine. The tract at residues 316–628 (SDPLFSAQRL…DGRRSPPWEP (313 aa)) is interaction with RBBP5. One can recognise a B30.2/SPRY domain in the interval 360–583 (LDCWAGKPIP…VSINFGPCFK (224 aa)).

Interacts with HCFC1. Core component of several methyltransferase-containing complexes including MLL1/MLL, MLL2/3 (also named ASCOM complex) and MLL4/WBP7. Each complex is at least composed of ASH2L, RBBP5, WDR5, DPY30, one or more specific histone methyltransferases (KMT2A/MLL1, KMT2D/MLL2, KMT2C/MLL3 and KMT2B/MLL4), and the facultative components PAGR1, BACC1, CHD8, E2F6, HCFC1, HCFC2, HSP70, INO80C, KDM6A, KANSL1, LAS1L, MAX, MCRS1, MEN1, MGA, KAT8/MOF, NCOA6, PAXIP1/PTIP, PELP1, PHF20, PRP31, RING2, RUVB1/TIP49A, RUVB2/TIP49B, SENP3, TAF1, TAF4, TAF6, TAF7, TAF9, TEX10 and alpha- and beta-tubulin. Component of the SET1 complex, at least composed of the catalytic subunit (SETD1A or SETD1B), WDR5, WDR82, RBBP5, ASH2L/ASH2, CXXC1/CFP1, HCFC1 and DPY30. Found in a complex with RBBP5, ASH2L, DPY30, KMT2A, KMT2D and WDR5. Component of a histone methylation complex composed of at least ZNF335, RBBP5, ASH2L and WDR5; the complex may have histone H3-specific methyltransferase activity, however does not have specificity for 'Lys-4' of histone H3. Within the complex, interacts with ZNF335. Interacts with RBBP5. Components of this complex may associate with components of a nuclear receptor-mediated transcription complex to form a complex at least composed of ZNF335, HCFC1, CCAR2, EMSY, MKI67, RBBP5, ASH2L and WDR5. Within this complex also interacts with CCAR2 and EMSY. Interacts with DPY30. Interacts with SETD1A and SETD1B. Both monomethylated and dimethylated on arginine residues in the C-terminus. Arg-296 is the major site. Methylation is not required for nuclear localization, nor for MLL complex integrity or maintenance of global histone H3K4me3 levels. In terms of tissue distribution, ubiquitously expressed. Predominantly expressed in adult heart and testis and fetal lung and liver, with barely detectable expression in adult lung, liver, kidney, prostate, and peripheral leukocytes.

The protein localises to the nucleus. In terms of biological role, transcriptional regulator. Component or associated component of some histone methyltransferase complexes which regulates transcription through recruitment of those complexes to gene promoters. Component of the Set1/Ash2 histone methyltransferase (HMT) complex, a complex that specifically methylates 'Lys-4' of histone H3, but not if the neighboring 'Lys-9' residue is already methylated. As part of the MLL1/MLL complex it is involved in methylation and dimethylation at 'Lys-4' of histone H3. May play a role in hematopoiesis. In association with RBBP5 and WDR5, stimulates the histone methyltransferase activities of KMT2A, KMT2B, KMT2C, KMT2D, SETD1A and SETD1B. This Homo sapiens (Human) protein is Set1/Ash2 histone methyltransferase complex subunit ASH2 (ASH2L).